Here is a 326-residue protein sequence, read N- to C-terminus: Metallophosphoesterase domain-containing protein 1 (326 aa).

Belongs to the UPF0046 family.

May have metallophosphoesterase activity (in vitro). The sequence is that of Metallophosphoesterase domain-containing protein 1 (Mpped1) from Mus musculus (Mouse).